Here is a 372-residue protein sequence, read N- to C-terminus: Chorismate synthase (372 aa).

2 residues coordinate NADP(+): Arg-48 and Arg-54. Residues Arg-125–Ser-127, Asn-238–Ala-239, Gly-278, Lys-293–Ser-297, and Arg-319 each bind FMN.

This sequence belongs to the chorismate synthase family. Homotetramer. The cofactor is FMNH2.

The enzyme catalyses 5-O-(1-carboxyvinyl)-3-phosphoshikimate = chorismate + phosphate. Its pathway is metabolic intermediate biosynthesis; chorismate biosynthesis; chorismate from D-erythrose 4-phosphate and phosphoenolpyruvate: step 7/7. In terms of biological role, catalyzes the anti-1,4-elimination of the C-3 phosphate and the C-6 proR hydrogen from 5-enolpyruvylshikimate-3-phosphate (EPSP) to yield chorismate, which is the branch point compound that serves as the starting substrate for the three terminal pathways of aromatic amino acid biosynthesis. This reaction introduces a second double bond into the aromatic ring system. This chain is Chorismate synthase, found in Xylella fastidiosa (strain M23).